Here is a 102-residue protein sequence, read N- to C-terminus: Small ribosomal subunit protein uS10 (102 aa).

This sequence belongs to the universal ribosomal protein uS10 family. In terms of assembly, part of the 30S ribosomal subunit.

Its function is as follows. Involved in the binding of tRNA to the ribosomes. The polypeptide is Small ribosomal subunit protein uS10 (Dehalococcoides mccartyi (strain ATCC BAA-2100 / JCM 16839 / KCTC 5957 / BAV1)).